The following is a 345-amino-acid chain: N-glycosylase/DNA lyase (345 aa).

Residues Asn149, Arg154, and Arg204 each coordinate DNA. Lys249 serves as the catalytic Schiff-base intermediate with DNA. Pro266 and Asp268 together coordinate 8-oxoguanine. DNA is bound by residues His270 and Gln287. 2 residues coordinate 8-oxoguanine: Gln315 and Phe319. Over residues 324–334 (RQSRHAQEPPA) the composition is skewed to basic and acidic residues. The tract at residues 324 to 345 (RQSRHAQEPPAKRRKGSKGPEG) is disordered. Over residues 335–345 (KRRKGSKGPEG) the composition is skewed to basic residues.

The protein belongs to the type-1 OGG1 family. Ubiquitous.

Its subcellular location is the nucleus. The protein localises to the nucleoplasm. The protein resides in the nucleus speckle. It localises to the nucleus matrix. It is found in the mitochondrion. It catalyses the reaction 2'-deoxyribonucleotide-(2'-deoxyribose 5'-phosphate)-2'-deoxyribonucleotide-DNA = a 3'-end 2'-deoxyribonucleotide-(2,3-dehydro-2,3-deoxyribose 5'-phosphate)-DNA + a 5'-end 5'-phospho-2'-deoxyribonucleoside-DNA + H(+). DNA repair enzyme that incises DNA at 8-oxoG residues. Excises 7,8-dihydro-8-oxoguanine and 2,6-diamino-4-hydroxy-5-N-methylformamidopyrimidine (FAPY) from damaged DNA. Has a beta-lyase activity that nicks DNA 3' to the lesion. This Homo sapiens (Human) protein is N-glycosylase/DNA lyase (OGG1).